Reading from the N-terminus, the 852-residue chain is MIITPYLNRKITRPLKWILALIFLYLIYICLFSNNSKPPKPRKKPKLVENYTCPFARTEGTASENLFFHTNNGTDARILVILDSLFSRHGKTIIQILNSQKLQFKAEAVSKNLPVLTTSRRGRYSLIIIENYYKYLNMAQWNRQLLDKYCKEYRVPMFSFMSSKPNDQLKRIKIKGSSLWMWQNQRIQRLAVTPSIIHRISKIGNYRQFSSSDPADWILFETSEKFESVLSGTVKSGYERAVVVRDKGLEDGVERIIFGRNLTDFQVKITFLDALWWAMGNQKSFTLDRFVQVDIDDVFVGAQGTRIVEEDVRKLISTQKEFRNYVQNFTFMLGFSGSYFRNGDDLEDRGDEFLVENAEKFVWFPHMWRHNHAHEHNFTYLEAIMAQNKLFAQNMHLPVDYPYAIAPQHDGVFPVHEQLFRAWRKVWNVSVTATEEYPHFKPATARKGFIHAGIHVLPRQTCGLYTHTQLFDEYPEGFDKVQKSIEGGDLFFTILLNPISIFMTHQQNYAYDRLALYTFENLFRFIKCWTNIKLKWQDPLTSSQLYFQKFPDERTPLWTNPCTDPRHHAILPPSINCTKKSLPDLLIIGPQKTGSTALASFLSLHPNTSQNTPVPGSFEEVQFFGGQNYLKGVEWYMSNFPSSSTVTFEKSATYFDNPSAPKQAASLVPHAKIVIILQNPAQRAYSWFQHILAHEDPVAITAGSLEVILDSNSTSSKKVRQRCISGGRYVHHLTKWLEHFSLQQMIFVDSDELKMKPPTVLNSLSKWLDLPEFPFETYIRYSPSKGFHCRLLDGKTKCLGESKGRKYPEMPENLRRKLDKIFSLDNSALYKFLRKNRLKIPTWLEESVRIRA.

The Cytoplasmic portion of the chain corresponds to 1–13 (MIITPYLNRKITR). Residues 14–34 (PLKWILALIFLYLIYICLFSN) form a helical; Signal-anchor for type II membrane protein membrane-spanning segment. The segment at 34-574 (NNSKPPKPRK…PRHHAILPPS (541 aa)) is heparan sulfate N-deacetylase 1. The Lumenal portion of the chain corresponds to 35 to 852 (NSKPPKPRKK…WLEESVRIRA (818 aa)). 7 N-linked (GlcNAc...) asparagine glycosylation sites follow: Asn-50, Asn-72, Asn-261, Asn-328, Asn-377, Asn-428, and Asn-576. The tract at residues 575-852 (INCTKKSLPD…WLEESVRIRA (278 aa)) is heparan sulfate N-sulfotransferase 1. Lys-592 (for sulfotransferase activity) is an active-site residue. 592–596 (KTGST) lines the 3'-phosphoadenylyl sulfate pocket. An N-linked (GlcNAc...) asparagine glycan is attached at Asn-607. Ser-686 contacts 3'-phosphoadenylyl sulfate. The N-linked (GlcNAc...) asparagine glycan is linked to Asn-712. Cys-789 and Cys-798 are disulfide-bonded. 803–807 (KGRKY) lines the 3'-phosphoadenylyl sulfate pocket.

The protein belongs to the sulfotransferase 1 family. NDST subfamily. Monomer. Present in some specific neurons in head and tail regions and muscles.

The protein localises to the golgi apparatus membrane. The enzyme catalyses alpha-D-glucosaminyl-[heparan sulfate](n) + 3'-phosphoadenylyl sulfate = N-sulfo-alpha-D-glucosaminyl-[heparan sulfate](n) + adenosine 3',5'-bisphosphate + 2 H(+). It participates in glycan metabolism; heparan sulfate biosynthesis. It functions in the pathway glycan metabolism; heparin biosynthesis. Functionally, essential bifunctional enzyme that catalyzes both the N-deacetylation and the N-sulfation of glucosamine (GlcNAc) of the glycosaminoglycan in heparan sulfate. Modifies the GlcNAc-GlcA disaccharide repeating sugar backbone to make N-sulfated heparosan, a prerequisite substrate for later modifications in heparin biosynthesis. The protein is Bifunctional heparan sulfate N-deacetylase/N-sulfotransferase 1 (hst-1) of Caenorhabditis elegans.